The primary structure comprises 249 residues: Probable transcriptional regulatory protein OTBS_0251 (249 aa).

This sequence belongs to the TACO1 family.

It localises to the cytoplasm. In Orientia tsutsugamushi (strain Boryong) (Rickettsia tsutsugamushi), this protein is Probable transcriptional regulatory protein OTBS_0251.